Reading from the N-terminus, the 719-residue chain is Alpha-galactosidase 2 (719 aa).

Catalysis depends on Asp-472, which acts as the Nucleophile. The active-site Proton donor is Asp-542.

It belongs to the glycosyl hydrolase 36 family.

It carries out the reaction Hydrolysis of terminal, non-reducing alpha-D-galactose residues in alpha-D-galactosides, including galactose oligosaccharides, galactomannans and galactolipids.. Its function is as follows. Alpha-galactosidase associated with the sucrase operon. The protein is Alpha-galactosidase 2 (agaS) of Pediococcus pentosaceus.